Reading from the N-terminus, the 281-residue chain is Diaminopimelate epimerase (281 aa).

Asn-13 and Asn-66 together coordinate substrate. Residue Cys-75 is the Proton donor of the active site. Residues 76–77, Asn-164, Asn-197, and 215–216 contribute to the substrate site; these read GN and ER. Catalysis depends on Cys-224, which acts as the Proton acceptor. Residue 225 to 226 participates in substrate binding; it reads GT.

This sequence belongs to the diaminopimelate epimerase family. As to quaternary structure, homodimer.

Its subcellular location is the cytoplasm. The enzyme catalyses (2S,6S)-2,6-diaminopimelate = meso-2,6-diaminopimelate. It participates in amino-acid biosynthesis; L-lysine biosynthesis via DAP pathway; DL-2,6-diaminopimelate from LL-2,6-diaminopimelate: step 1/1. Functionally, catalyzes the stereoinversion of LL-2,6-diaminopimelate (L,L-DAP) to meso-diaminopimelate (meso-DAP), a precursor of L-lysine and an essential component of the bacterial peptidoglycan. The chain is Diaminopimelate epimerase from Gloeothece citriformis (strain PCC 7424) (Cyanothece sp. (strain PCC 7424)).